Consider the following 320-residue polypeptide: Methyltransferase gedG (320 aa).

The tract at residues D61–C154 is methyltransferase domain. The tract at residues G231–Q252 is disordered. A compositionally biased stretch (basic and acidic residues) spans P235–Q252.

The protein belongs to the methyltransferase superfamily.

The protein operates within secondary metabolite biosynthesis. Functionally, methyltransferase; part of the gene cluster that mediates the biosynthesis of geodin, an intermediate in the biosynthesis of other natural products. The pathway begins with the synthesis of atrochrysone thioester by the polyketide synthase (PKS) gedC. The atrochrysone carboxyl ACP thioesterase gedB then breaks the thioester bond and releases the atrochrysone carboxylic acid from gedC. The atrochrysone carboxylic acid is then converted to atrochrysone which is further transformed into emodinanthrone. The next step is performed by the emodinanthrone oxygenase gedH that catalyzes the oxidation of emodinanthrone to emodin. Emodin O-methyltransferase encoded probably by gedA then catalyzes methylation of the 8-hydroxy group of emodin to form questin. Ring cleavage of questin by questin oxidase gedK leads to desmethylsulochrin via several intermediates including questin epoxide. Another methylation step probably catalyzed by methyltransferase gedG leads to the formation of sulochrin which is further converted to dihydrogeodin by the sulochrin halogenase gedL. Finally, the dihydrogeodin oxidase gedJ catalyzes the stereospecific phenol oxidative coupling reaction converting dihydrogeodin to geodin. The protein is Methyltransferase gedG of Aspergillus terreus (strain NIH 2624 / FGSC A1156).